Reading from the N-terminus, the 337-residue chain is MPQDVDFHIPLPGRQSPDHARAEAEQLAWPRSLGLIRSDAAAERHLRGGYADLASRFYPHATGADLDLGVDLMSWFFLFDDLFDGPRGENPEDTKQLTDQVAAALDGPLPDTAPPIAHGFADIWRRTCEGMTPAWCARSARHWRNYFDGYVDEAESRFWNAPCDSAAQYLAMRRHTIGVQPTVDLAERAGRFEVPHRVFDSAVMSAMLQIAVDVNLLLNDIASLEKEEARGEQNNMVMILRREHGWSKSRSVSHMQNEVRARLEQYLLLESCLPKVGEIYQLDTAEREALERYRTDAVRTVIRGSYDWHRSSGRYDAEFALAAGAQGYLEELGSSAH.

D80 and D84 together coordinate Mg(2+). Residues 80 to 84 carry the DDXXD motif motif; the sequence is DDLFD. C128 and C136 form a disulfide bridge. Mg(2+) contacts are provided by N219, S223, and E227.

The protein belongs to the terpene synthase family. As to quaternary structure, monomer. Requires Mg(2+) as cofactor.

It catalyses the reaction (2E,6E)-farnesyl diphosphate = pentalenene + diphosphate. It participates in sesquiterpene biosynthesis; pentalenene biosynthesis; pentalenene from farnesyl diphosphate: step 1/1. The protein operates within antibiotic biosynthesis; pentalenolactone biosynthesis. Catalyzes the cyclization of farnesyl diphosphate (FPP) to the tricyclic sesquiterpene pentalenene, which is the hydrocarbon precursor of the pentalenolactone family of antibiotics produced by a variety of Streptomyces species. The sequence is that of Pentalenene synthase (penA) from Streptomyces exfoliatus (Streptomyces hydrogenans).